A 119-amino-acid chain; its full sequence is Holo-[acyl-carrier-protein] synthase (119 aa).

Mg(2+)-binding residues include D8 and E58.

Belongs to the P-Pant transferase superfamily. AcpS family. It depends on Mg(2+) as a cofactor.

The protein localises to the cytoplasm. It catalyses the reaction apo-[ACP] + CoA = holo-[ACP] + adenosine 3',5'-bisphosphate + H(+). Its function is as follows. Transfers the 4'-phosphopantetheine moiety from coenzyme A to a Ser of acyl-carrier-protein. In Bacillus cereus (strain ATCC 14579 / DSM 31 / CCUG 7414 / JCM 2152 / NBRC 15305 / NCIMB 9373 / NCTC 2599 / NRRL B-3711), this protein is Holo-[acyl-carrier-protein] synthase.